The following is a 562-amino-acid chain: Adenylate kinase isoenzyme 5 (562 aa).

2 adenylate kinase regions span residues Lys-133–Asp-316 and Lys-377–Asp-559. Gly-142–Thr-147 is a binding site for ATP. The segment at Ser-162–Ala-193 is NMP 1. Residues Arg-168, Glu-191–Ala-193, Gly-219–Arg-222, and Gln-226 each bind AMP. Residues Lys-256–Asp-266 are LID 1. Arg-257 is an ATP binding site. AMP contacts are provided by Arg-263 and Arg-274. Gly-386–Thr-391 provides a ligand contact to ATP. The tract at residues Ser-406–Val-435 is NMP 2. AMP-binding positions include Thr-407, Glu-433–Val-435, Gly-462–Arg-465, and Gln-469. The tract at residues Gln-499 to Asp-509 is LID 2. Arg-500 contributes to the ATP binding site. An AMP-binding site is contributed by Arg-517. Gly-545 is an ATP binding site.

The protein belongs to the adenylate kinase family. In terms of assembly, monomer.

It localises to the cytoplasm. The catalysed reaction is AMP + ATP = 2 ADP. It carries out the reaction a 2'-deoxyribonucleoside 5'-diphosphate + ATP = a 2'-deoxyribonucleoside 5'-triphosphate + ADP. The enzyme catalyses a ribonucleoside 5'-diphosphate + ATP = a ribonucleoside 5'-triphosphate + ADP. Its function is as follows. Nucleoside monophosphate (NMP) kinase that catalyzes the reversible transfer of the terminal phosphate group between nucleoside triphosphates and monophosphates. Active on AMP and dAMP with ATP as a donor. When GTP is used as phosphate donor, the enzyme phosphorylates AMP, CMP, and to a small extent dCMP. Also displays broad nucleoside diphosphate kinase activity. This chain is Adenylate kinase isoenzyme 5 (Ak5), found in Bos taurus (Bovine).